The chain runs to 309 residues: Tumor necrosis factor ligand superfamily member 9 (309 aa).

Basic and acidic residues predominate over residues 1–16 (MDQHTLDVEDTADARH). A disordered region spans residues 1–20 (MDQHTLDVEDTADARHPAGT). The Cytoplasmic portion of the chain corresponds to 1-82 (MDQHTLDVED…ALNFCSRHPK (82 aa)). A helical; Signal-anchor for type II membrane protein transmembrane segment spans residues 83-103 (LYGLVALVLLLLIAACVPIFT). The Extracellular portion of the chain corresponds to 104–309 (RTEPRPALTI…FLVKPDNPWE (206 aa)). N-linked (GlcNAc...) asparagine glycans are attached at residues asparagine 139, asparagine 161, and asparagine 293. Residues 147–302 (VFAKLLAKNQ…NTTSFGLFLV (156 aa)) enclose the THD domain.

Belongs to the tumor necrosis factor family. Homotrimer.

The protein resides in the membrane. Its function is as follows. Cytokine that binds to TNFRSF9. Induces the proliferation of activated peripheral blood T-cells. May have a role in activation-induced cell death (AICD). May play a role in cognate interactions between T-cells and B-cells/macrophages. The protein is Tumor necrosis factor ligand superfamily member 9 (Tnfsf9) of Mus musculus (Mouse).